A 410-amino-acid chain; its full sequence is Zinc transporter ttm-1 (410 aa).

Low complexity-rich tracts occupy residues 1 to 13 (MTIS…SIRL) and 35 to 46 (SVSSSDSGVSAD). The interval 1 to 94 (MTISMISPSS…GAHKHSHDEK (94 aa)) is disordered. Residues 1–103 (MTISMISPSS…KYQKGRRAEK (103 aa)) lie on the Cytoplasmic side of the membrane. Positions 50-69 (HHHHGHGHGHSHGGHGHSHT) are enriched in basic residues. A helical membrane pass occupies residues 104 to 124 (VLWAVAALSAVFIAAEFVGGF). Topologically, residues 125–129 (WAQSL) are extracellular. Residues 130 to 150 (AIMTDAGHMLSDLLSFIISIF) form a helical membrane-spanning segment. Over 151–171 (AIRCARLPASKRLSFGYERAE) the chain is Cytoplasmic. Residues 172 to 192 (VLGALTSVIILWVLTTVLVVV) form a helical membrane-spanning segment. Residues 193–208 (AIQRIVNNEHEVDADV) are Extracellular-facing. A helical membrane pass occupies residues 209-229 (MLITAGVGVLFNIVMGLVLHF). Over 230–258 (GTGGHGHTHGGHSSHGHAHDGKNVNVRAA) the chain is Cytoplasmic. A helical transmembrane segment spans residues 259-279 (LIHVIGDLVQSIGVLIAALII). Position 280 (Arg280) is a topological domain, extracellular. The helical transmembrane segment at 281–301 (FTGWTLADPICTFLFSIIVLF) threads the bilayer. The Cytoplasmic portion of the chain corresponds to 302–410 (TTVTVMRDIF…CDTCQQQETA (109 aa)).

Belongs to the cation diffusion facilitator (CDF) transporter (TC 2.A.4) family. SLC30A subfamily. As to expression, isoform a: Expressed in the hypodermis and the intestine. Isoform b: Expressed in the intestine, head neurons, seam cells, hypodermis, and the vulva.

Its subcellular location is the cytoplasmic vesicle membrane. The protein localises to the apical cell membrane. In terms of biological role, promotes excretion of zinc from intestinal cells into the intestinal lumen in response to increased dietary zinc. Involved in cadmium resistance, possibly by promoting its transport from cells. Involved in resistance to B.thuringiensis pore-forming toxin Cry5B downstream of the sek-1 and pmk-1 MAPK kinase pathway. The chain is Zinc transporter ttm-1 from Caenorhabditis elegans.